The chain runs to 372 residues: O-glycoside alpha-1,2-mannosyltransferase homolog 2 (372 aa).

Residues 1–6 are Cytoplasmic-facing; the sequence is MRISRL. The chain crosses the membrane as a helical; Signal-anchor for type II membrane protein span at residues 7–27; sequence LIRVLLGFVILFITYILFPSI. The Lumenal segment spans residues 28–372; sequence PKALVNTLNV…NLTNEDYDEL (345 aa). The active-site Nucleophile is the glutamate 271.

The protein belongs to the glycosyltransferase 15 family.

It localises to the endoplasmic reticulum membrane. Its function is as follows. Probable mannosyltransferase involved in O-glycosylation of cell wall and secreted proteins. The polypeptide is O-glycoside alpha-1,2-mannosyltransferase homolog 2 (omh2) (Schizosaccharomyces pombe (strain 972 / ATCC 24843) (Fission yeast)).